Reading from the N-terminus, the 513-residue chain is Probable hydrolase YhcX (513 aa).

Residues 14 to 212 (MVIRNIEEKD…YATLMEWNNV (199 aa)) enclose the N-acetyltransferase domain. The 256-residue stretch at 229–484 (VRICVIQYEM…EMVVIGDVDL (256 aa)) folds into the CN hydrolase domain. E270 acts as the Proton acceptor in catalysis. Catalysis depends on K345, which acts as the Proton donor. The active-site Nucleophile is the C379.

The protein belongs to the carbon-nitrogen hydrolase superfamily. NIT1/NIT2 family.

In Bacillus subtilis (strain 168), this protein is Probable hydrolase YhcX (yhcX).